Reading from the N-terminus, the 182-residue chain is MRVLKYAILGLLRKGELSGYDITSYFKEELGQFWSAKHSQIYPELKKLTDEGFITFRTTIQGTKLEKKMYTLTDSGKQELHDWLIRHQPIPETVKDEFMLKAYFISCLSRQEASDLFKDQLQKRQAKLSDLQGSYEKLMASAEPMSFSSPDFGHYLVLTKALEREKNYVSWLESILAMIDKD.

It belongs to the PadR family. In terms of assembly, homodimer.

The protein resides in the cytoplasm. With respect to regulation, padR repressor activity is inhibited in the presence of phenolic acids, which directly modulate PadR binding to the promoter of padC, leading to the dissociation of PadR from the operator DNA and expression of padC. In the presence of MgCl(2), binding is not altered by phenolic acids. Transcriptional regulator involved in the regulation of the metabolism of phenolic acids. In the absence of phenolic acids, represses the expression of padC, which encodes a phenolic acid decarboxylase (PAD) involved in the detoxification of harmful phenolic acids. Acts by binding to the padC promoter region, preventing the transcription of the gene. This is Negative transcriptional regulator PadR from Bacillus subtilis (strain 168).